A 712-amino-acid polypeptide reads, in one-letter code: Anaerobic ribonucleoside-triphosphate reductase (712 aa).

One can recognise an ATP-cone domain in the interval 3–92 (PHVMKRDGCK…EYRHDRDIQR (90 aa)). Residues 583–708 (KKVNPYDKID…VKRRVKHLGN (126 aa)) enclose the Glycine radical domain. Residues Cys644, Cys647, Cys662, and Cys665 each contribute to the Zn(2+) site. Gly681 is subject to Glycine radical.

It belongs to the anaerobic ribonucleoside-triphosphate reductase family. Forms a tetramer composed of two NrdD and two NrdG subunits.

It carries out the reaction a ribonucleoside 5'-triphosphate + formate + H(+) = a 2'-deoxyribonucleoside 5'-triphosphate + CO2 + H2O. With respect to regulation, activated under anaerobic conditions by NrdG, a tightly associated activase. Activation involves the formation of a glycyl radical at Gly-681. Its function is as follows. Catalyzes the conversion of ribonucleotides into deoxyribonucleotides, which are required for DNA synthesis and repair. The sequence is that of Anaerobic ribonucleoside-triphosphate reductase (nrdD) from Salmonella typhimurium (strain LT2 / SGSC1412 / ATCC 700720).